We begin with the raw amino-acid sequence, 219 residues long: Interleukin-12 subunit alpha (219 aa).

An N-terminal signal peptide occupies residues 1-22 (MCPARSLLLVATLVLLDYLSLA). Residues N24, N93, and N107 are each glycosylated (N-linked (GlcNAc...) asparagine). Disulfide bonds link C37–C110, C64–C196, and C85–C123.

Belongs to the IL-6 superfamily. In terms of assembly, heterodimer with IL12B; disulfide-linked. This heterodimer is known as interleukin IL-12. Heterodimer with EBI3/IL27B; not disulfide-linked. This heterodimer is known as interleukin IL-35. Interacts with NBR1; this interaction promotes IL-12 secretion.

It is found in the secreted. Its function is as follows. Heterodimerizes with IL12B to form the IL-12 cytokine or with EBI3/IL27B to form the IL-35 cytokine. IL-12 is primarily produced by professional antigen-presenting cells (APCs) such as B-cells and dendritic cells (DCs) as well as macrophages and granulocytes and regulates T-cell and natural killer-cell responses, induces the production of interferon-gamma (IFN-gamma), favors the differentiation of T-helper 1 (Th1) cells and is an important link between innate resistance and adaptive immunity. Mechanistically, exerts its biological effects through a receptor composed of IL12R1 and IL12R2 subunits. Binding to the receptor results in the rapid tyrosine phosphorylation of a number of cellular substrates including the JAK family kinases TYK2 and JAK2. In turn, recruited STAT4 gets phosphorylated and translocates to the nucleus where it regulates cytokine/growth factor responsive genes. As part of IL-35, plays essential roles in maintaining the immune homeostasis of the liver microenvironment and also functions as an immune-suppressive cytokine. Mediates biological events through unconventional receptors composed of IL12RB2 and gp130/IL6ST heterodimers or homodimers. Signaling requires the transcription factors STAT1 and STAT4, which form a unique heterodimer that binds to distinct DNA sites. This Macaca mulatta (Rhesus macaque) protein is Interleukin-12 subunit alpha (IL12A).